A 357-amino-acid chain; its full sequence is Alanine racemase, catabolic (357 aa).

K33 (proton acceptor; specific for D-alanine) is an active-site residue. K33 carries the N6-(pyridoxal phosphate)lysine modification. K122 carries the N6-carboxylysine modification. R129 contributes to the substrate binding site. Y253 (proton acceptor; specific for L-alanine) is an active-site residue. Residue M301 coordinates substrate.

Belongs to the alanine racemase family. As to quaternary structure, homodimer. It depends on pyridoxal 5'-phosphate as a cofactor.

The enzyme catalyses L-alanine = D-alanine. In terms of biological role, isomerizes L-alanine to D-alanine which is then oxidized to pyruvate by DadA. This Pseudomonas aeruginosa (strain ATCC 15692 / DSM 22644 / CIP 104116 / JCM 14847 / LMG 12228 / 1C / PRS 101 / PAO1) protein is Alanine racemase, catabolic.